The sequence spans 143 residues: MTATIDRRLSTLNPNAPVFDPVEFREVEDFSPKWWDLVTTSKWFRDFWLSANSENEFLGGDDFSVMEEEFEEMIASSDGGSMADTVTEADVASYLKMLLNIAESTKEKIYRSKVSSCSPKYNQKKYMNPNFNCRRNHHIYQPR.

A PAM2-like motif is present at residues 11–21 (TLNPNAPVFDP).

The protein is Polyadenylate-binding protein-interacting protein 2 (CID2) of Arabidopsis thaliana (Mouse-ear cress).